Reading from the N-terminus, the 291-residue chain is Lipoyl synthase (291 aa).

[4Fe-4S] cluster-binding residues include Cys35, Cys40, Cys46, Cys61, Cys65, Cys68, and Ser273. In terms of domain architecture, Radical SAM core spans 47–262; that stretch reads FGKRQATFLI…KERALTMGFE (216 aa).

The protein belongs to the radical SAM superfamily. Lipoyl synthase family. [4Fe-4S] cluster is required as a cofactor.

The protein resides in the cytoplasm. It carries out the reaction [[Fe-S] cluster scaffold protein carrying a second [4Fe-4S](2+) cluster] + N(6)-octanoyl-L-lysyl-[protein] + 2 oxidized [2Fe-2S]-[ferredoxin] + 2 S-adenosyl-L-methionine + 4 H(+) = [[Fe-S] cluster scaffold protein] + N(6)-[(R)-dihydrolipoyl]-L-lysyl-[protein] + 4 Fe(3+) + 2 hydrogen sulfide + 2 5'-deoxyadenosine + 2 L-methionine + 2 reduced [2Fe-2S]-[ferredoxin]. The protein operates within protein modification; protein lipoylation via endogenous pathway; protein N(6)-(lipoyl)lysine from octanoyl-[acyl-carrier-protein]: step 2/2. Its function is as follows. Catalyzes the radical-mediated insertion of two sulfur atoms into the C-6 and C-8 positions of the octanoyl moiety bound to the lipoyl domains of lipoate-dependent enzymes, thereby converting the octanoylated domains into lipoylated derivatives. The protein is Lipoyl synthase of Citrifermentans bemidjiense (strain ATCC BAA-1014 / DSM 16622 / JCM 12645 / Bem) (Geobacter bemidjiensis).